The following is a 61-amino-acid chain: Photosystem II reaction center protein K (61 aa).

A propeptide spanning residues 1 to 24 (MLNTFSLIGICLNSTLFSSSFFFG) is cleaved from the precursor. The helical transmembrane segment at 36–56 (IVDIMPVIPLFFFLLAFVWQA) threads the bilayer.

It belongs to the PsbK family. In terms of assembly, PSII is composed of 1 copy each of membrane proteins PsbA, PsbB, PsbC, PsbD, PsbE, PsbF, PsbH, PsbI, PsbJ, PsbK, PsbL, PsbM, PsbT, PsbX, PsbY, PsbZ, Psb30/Ycf12, at least 3 peripheral proteins of the oxygen-evolving complex and a large number of cofactors. It forms dimeric complexes.

Its subcellular location is the plastid. The protein localises to the chloroplast thylakoid membrane. In terms of biological role, one of the components of the core complex of photosystem II (PSII). PSII is a light-driven water:plastoquinone oxidoreductase that uses light energy to abstract electrons from H(2)O, generating O(2) and a proton gradient subsequently used for ATP formation. It consists of a core antenna complex that captures photons, and an electron transfer chain that converts photonic excitation into a charge separation. This is Photosystem II reaction center protein K from Nicotiana tomentosiformis (Tobacco).